A 143-amino-acid chain; its full sequence is Transcriptional regulator MraZ (143 aa).

2 consecutive SpoVT-AbrB domains span residues 5 to 47 (EYQH…PKDE) and 76 to 119 (AIES…SKDN).

This sequence belongs to the MraZ family. In terms of assembly, forms oligomers.

The protein resides in the cytoplasm. It is found in the nucleoid. The polypeptide is Transcriptional regulator MraZ (Oenococcus oeni (strain ATCC BAA-331 / PSU-1)).